Here is a 186-residue protein sequence, read N- to C-terminus: ATP-dependent protease subunit HslV (186 aa).

Residue Thr-14 is part of the active site. Residues Ala-168, Cys-171, and Thr-174 each contribute to the Na(+) site.

Belongs to the peptidase T1B family. HslV subfamily. As to quaternary structure, a double ring-shaped homohexamer of HslV is capped on each side by a ring-shaped HslU homohexamer. The assembly of the HslU/HslV complex is dependent on binding of ATP.

It is found in the cytoplasm. The enzyme catalyses ATP-dependent cleavage of peptide bonds with broad specificity.. Its activity is regulated as follows. Allosterically activated by HslU binding. Protease subunit of a proteasome-like degradation complex believed to be a general protein degrading machinery. This is ATP-dependent protease subunit HslV from Bradyrhizobium sp. (strain ORS 278).